A 20-amino-acid chain; its full sequence is Cupiennin-6f (20 aa).

As to expression, expressed by the venom gland.

It localises to the secreted. The polypeptide is Cupiennin-6f (Cupiennius salei (American wandering spider)).